Reading from the N-terminus, the 310-residue chain is tRNA uridine(34) hydroxylase (310 aa).

The region spanning 134–232 is the Rhodanese domain; sequence DDPDTLLIDT…YFEEVSQTES (99 aa). Residue Cys192 is the Cysteine persulfide intermediate of the active site.

It belongs to the TrhO family.

The catalysed reaction is uridine(34) in tRNA + AH2 + O2 = 5-hydroxyuridine(34) in tRNA + A + H2O. Catalyzes oxygen-dependent 5-hydroxyuridine (ho5U) modification at position 34 in tRNAs. This is tRNA uridine(34) hydroxylase from Prochlorococcus marinus (strain MIT 9313).